The sequence spans 293 residues: Plant cysteine oxidase 1 (293 aa).

Fe cation contacts are provided by His-148, His-150, and His-211. The tract at residues 250 to 293 (SEDDDVLSSEEEKEGYAWLQERDDNPEDHTNVVGALYRGPKVED) is disordered. The span at 251-262 (EDDDVLSSEEEK) shows a compositional bias: acidic residues. Basic and acidic residues predominate over residues 269 to 279 (QERDDNPEDHT).

Belongs to the cysteine dioxygenase family. Requires Fe(2+) as cofactor.

It is found in the nucleus. It localises to the cytoplasm. It carries out the reaction L-cysteine + O2 = 3-sulfino-L-alanine + H(+). Catalyzes the oxidation of N-terminal cysteine residues (N-Cys), thus preparing the protein for N-end rule pathway-mediated proteasomal degradation, upstream of the N-end rule enzymes ATE1, ATE2 and PRT6. Controls the preparation of the group VII ethylene response factor (ERF-VII) proteins for degradation via the 26S proteasome N-end rule pathway. Acts as an oxygen sensor that controls the stability of ERF-VII proteins, which are stabilized in flooding-induced hypoxia, and regulate transcriptional adaptation to these adverse conditions. Not active on Cys located inside or at the C-terminus of a peptide. Acts redundantly with PCO2 to repress the anaerobic response. This chain is Plant cysteine oxidase 1, found in Arabidopsis thaliana (Mouse-ear cress).